A 190-amino-acid polypeptide reads, in one-letter code: ATP synthase subunit b (190 aa).

A helical transmembrane segment spans residues 34–54 (LDIFETNLINLAILVGILFYF).

The protein belongs to the ATPase B chain family. F-type ATPases have 2 components, F(1) - the catalytic core - and F(0) - the membrane proton channel. F(1) has five subunits: alpha(3), beta(3), gamma(1), delta(1), epsilon(1). F(0) has four main subunits: a(1), b(1), b'(1) and c(10-14). The alpha and beta chains form an alternating ring which encloses part of the gamma chain. F(1) is attached to F(0) by a central stalk formed by the gamma and epsilon chains, while a peripheral stalk is formed by the delta, b and b' chains.

It localises to the cellular thylakoid membrane. F(1)F(0) ATP synthase produces ATP from ADP in the presence of a proton or sodium gradient. F-type ATPases consist of two structural domains, F(1) containing the extramembraneous catalytic core and F(0) containing the membrane proton channel, linked together by a central stalk and a peripheral stalk. During catalysis, ATP synthesis in the catalytic domain of F(1) is coupled via a rotary mechanism of the central stalk subunits to proton translocation. Its function is as follows. Component of the F(0) channel, it forms part of the peripheral stalk, linking F(1) to F(0). The protein is ATP synthase subunit b of Nostoc punctiforme (strain ATCC 29133 / PCC 73102).